A 187-amino-acid chain; its full sequence is MFRVITRGAHTAASRQALIEKIIRVDHAGELGADRIYAGQLAVLQGSSVGSVIKKMWDEEKEHLDTMERLAAKHNVPHTVFSPVFSVAAYALGVGSALLGKEGAMACTIAVEELIGQHYNDQLKELLADDPETHKELLKILTRLRDEELHHHDTGVEHDGMKAPAYSALKWIIQTGCKGAIAIAEKI.

Residues 1 to 8 constitute a mitochondrion transit peptide; that stretch reads MFRVITRG. An NADH-binding site is contributed by Lys-21. Tandem repeats lie at residues 28–99 and 100–187. Positions 28–187 are 2 X approximate tandem repeats; sequence AGELGADRIY…KGAIAIAEKI (160 aa). Residues Glu-30, Glu-60, His-63, Glu-112, Glu-148, and His-151 each coordinate Fe cation. Lys-186 contributes to the NADH binding site.

Belongs to the COQ7 family. As to quaternary structure, component of a multi-subunit COQ enzyme complex. Requires Fe cation as cofactor.

The protein resides in the mitochondrion inner membrane. Its subcellular location is the mitochondrion. It is found in the nucleus. It catalyses the reaction a 5-methoxy-2-methyl-3-(all-trans-polyprenyl)benzoquinone + NADH + O2 = a 3-demethylubiquinone + NAD(+) + H2O. Its pathway is cofactor biosynthesis; ubiquinone biosynthesis. In terms of biological role, catalyzes the hydroxylation of the 5-methoxy-2-methyl-3-(all-trans-polyprenyl)benzoquinone at the C6 position and participates in the biosynthesis of ubiquinone. Catalyzes the reaction through a substrate-mediated reduction pathway, whereby NADH shuttles electrons to 5-methoxy-2-methyl-3-(all-trans-decaprenyl)benzoquinone, which then transfers the electrons to the two Fe(3+) centers. The binding of 5-methoxy-2-methyl-3-(all-trans-polyprenyl)benzoquinone (DMQn) mediates reduction of the diiron center by nicotinamide adenine dinucleotide (NADH) and initiates oxygen activation for subsequent DMQ hydroxylation. Also has a structural role in the COQ enzyme complex, stabilizing other COQ polypeptides. Involved in lifespan determination in a ubiquinone-independent manner. Plays a role in modulating mitochondrial stress responses, acting in the nucleus, perhaps via regulating gene expression, independent of its characterized mitochondrial function in ubiquinone biosynthesis. Plays a role in modulating polyribosome formation. The protein is NADPH-dependent 3-demethoxyubiquinone 3-hydroxylase, mitochondrial of Caenorhabditis elegans.